Reading from the N-terminus, the 176-residue chain is NAD(P)H-quinone oxidoreductase subunit 6, chloroplastic (176 aa).

Transmembrane regions (helical) follow at residues 10–30 (FLLV…VLLT), 32–52 (PIYS…FYIL), 61–81 (AQLL…VMFM), 95–115 (VGSG…ITII), and 152–172 (FFLP…GAIA).

It belongs to the complex I subunit 6 family. In terms of assembly, NDH is composed of at least 16 different subunits, 5 of which are encoded in the nucleus.

It is found in the plastid. It localises to the chloroplast thylakoid membrane. The enzyme catalyses a plastoquinone + NADH + (n+1) H(+)(in) = a plastoquinol + NAD(+) + n H(+)(out). It catalyses the reaction a plastoquinone + NADPH + (n+1) H(+)(in) = a plastoquinol + NADP(+) + n H(+)(out). NDH shuttles electrons from NAD(P)H:plastoquinone, via FMN and iron-sulfur (Fe-S) centers, to quinones in the photosynthetic chain and possibly in a chloroplast respiratory chain. The immediate electron acceptor for the enzyme in this species is believed to be plastoquinone. Couples the redox reaction to proton translocation, and thus conserves the redox energy in a proton gradient. This is NAD(P)H-quinone oxidoreductase subunit 6, chloroplastic (ndhG) from Manihot esculenta (Cassava).